Here is a 46-residue protein sequence, read N- to C-terminus: Large ribosomal subunit protein bL34 (46 aa).

Belongs to the bacterial ribosomal protein bL34 family.

The polypeptide is Large ribosomal subunit protein bL34 (Trichodesmium erythraeum (strain IMS101)).